We begin with the raw amino-acid sequence, 351 residues long: Thiamine-phosphate synthase (351 aa).

A unknown region spans residues 1-128; sequence MKNPNIIQPE…SKIASEIRYE (128 aa). Positions 129-351 are thiamine-phosphate synthase; it reads IYTLEIEILN…IIIKELSHEN (223 aa). Residues 180–184 and asparagine 212 contribute to the 4-amino-2-methyl-5-(diphosphooxymethyl)pyrimidine site; that span reads QHRFK. Residues asparagine 213 and aspartate 232 each contribute to the Mg(2+) site. Serine 251 provides a ligand contact to 4-amino-2-methyl-5-(diphosphooxymethyl)pyrimidine. 277–279 is a binding site for 2-[(2R,5Z)-2-carboxy-4-methylthiazol-5(2H)-ylidene]ethyl phosphate; sequence TLT. Lysine 280 provides a ligand contact to 4-amino-2-methyl-5-(diphosphooxymethyl)pyrimidine. 2-[(2R,5Z)-2-carboxy-4-methylthiazol-5(2H)-ylidene]ethyl phosphate is bound by residues glycine 307 and 327–328; that span reads VS.

The protein belongs to the thiamine-phosphate synthase family.

The enzyme catalyses 2-[(2R,5Z)-2-carboxy-4-methylthiazol-5(2H)-ylidene]ethyl phosphate + 4-amino-2-methyl-5-(diphosphooxymethyl)pyrimidine + 2 H(+) = thiamine phosphate + CO2 + diphosphate. It carries out the reaction 2-(2-carboxy-4-methylthiazol-5-yl)ethyl phosphate + 4-amino-2-methyl-5-(diphosphooxymethyl)pyrimidine + 2 H(+) = thiamine phosphate + CO2 + diphosphate. The catalysed reaction is 4-methyl-5-(2-phosphooxyethyl)-thiazole + 4-amino-2-methyl-5-(diphosphooxymethyl)pyrimidine + H(+) = thiamine phosphate + diphosphate. It functions in the pathway cofactor biosynthesis; thiamine diphosphate biosynthesis; thiamine phosphate from 4-amino-2-methyl-5-diphosphomethylpyrimidine and 4-methyl-5-(2-phosphoethyl)-thiazole: step 1/1. Its function is as follows. Condenses 4-methyl-5-(beta-hydroxyethyl)thiazole monophosphate (THZ-P) and 2-methyl-4-amino-5-hydroxymethyl pyrimidine pyrophosphate (HMP-PP) to form thiamine monophosphate (TMP). The protein is Thiamine-phosphate synthase of Prochlorococcus marinus subsp. pastoris (strain CCMP1986 / NIES-2087 / MED4).